The sequence spans 156 residues: Small ribosomal subunit protein uS7 (156 aa).

Belongs to the universal ribosomal protein uS7 family. As to quaternary structure, part of the 30S ribosomal subunit. Contacts proteins S9 and S11.

Functionally, one of the primary rRNA binding proteins, it binds directly to 16S rRNA where it nucleates assembly of the head domain of the 30S subunit. Is located at the subunit interface close to the decoding center, probably blocks exit of the E-site tRNA. The chain is Small ribosomal subunit protein uS7 from Mycoplasmopsis pulmonis (strain UAB CTIP) (Mycoplasma pulmonis).